The following is a 428-amino-acid chain: MEETSVAGDPGPDAGTSTAPNAAPEPVARRQRILFVGEAATLAHVVRPFVLARSLDPSRYEVHFACDPRFNKLLGPLPFPHHPIHTVPSEEVLLKIAQGRLFYNTRTLRKYIAADRKILNEIAPDVVVGDNRLSLSVSARLAGIPYIAIANAYWSPQARRRFPLPDVPWTRFFGVRPVSILYRLYRPLIFALYCLPLNWLRRKHGLSSLGWDLCRIFTDGDYTLYADVPELVPTYNLPANHRYLGPVLWSPDVKPPTWWHSLPTDRPIIYATLGSSGGKNLLQVVLNALADLPVTVIAATAGRNHLKNVPANAFVADYLPGEAAAARSAVVLCNGGSPTTQQALAAGVPVIGLPSNMDQHLNMEALERAGAGVLLRTERLNTEGVAAAVKQVLSGAEFRQAARRLAEAFGPDFAGFPQHIESALRLVC.

The tract at residues 1 to 23 (MEETSVAGDPGPDAGTSTAPNAA) is disordered.

It belongs to the UDP-glycosyltransferase family.

Its function is as follows. Involved in glycosylation steps downstream of mono-O-methyl-glycosyl-p-hydroxybenzoic acid derivative (p-HBAD I) and 2-O-methyl-rhamnosyl-phenolphthiocerol dimycocerosate (mycoside B) during the p-hydroxybenzoic acid derivatives (p-HBAD) and glycosylated phenolphthiocerol dimycocerosates (PGL) biosynthesis. This Mycobacterium tuberculosis (strain ATCC 25177 / H37Ra) protein is PGL/p-HBAD biosynthesis glycosyltransferase MRA_2985.